Consider the following 217-residue polypeptide: uncharacterized protein (217 aa).

The next 4 helical transmembrane spans lie at 9-29, 54-74, 103-125, and 135-157; these read ISLA…LSTI, FLST…LLEL, LMAY…RFLS, and IVFW…ASYI.

This sequence belongs to the DP1 family.

The protein resides in the endoplasmic reticulum membrane. This is an uncharacterized protein from Schizosaccharomyces pombe (strain 972 / ATCC 24843) (Fission yeast).